A 39-amino-acid chain; its full sequence is Cytochrome b6-f complex subunit 5 (39 aa).

The chain crosses the membrane as a helical span at residues 5-25 (LLCGIVLGLVPITIVGLFVSA).

The protein belongs to the PetG family. The 4 large subunits of the cytochrome b6-f complex are cytochrome b6, subunit IV (17 kDa polypeptide, PetD), cytochrome f and the Rieske protein, while the 4 small subunits are PetG, PetL, PetM and PetN. The complex functions as a dimer.

It localises to the cellular thylakoid membrane. In terms of biological role, component of the cytochrome b6-f complex, which mediates electron transfer between photosystem II (PSII) and photosystem I (PSI), cyclic electron flow around PSI, and state transitions. PetG is required for either the stability or assembly of the cytochrome b6-f complex. The sequence is that of Cytochrome b6-f complex subunit 5 from Prochlorococcus marinus (strain MIT 9211).